Here is a 116-residue protein sequence, read N- to C-terminus: Classical arabinogalactan protein 25 (116 aa).

The first 28 residues, 1–28, serve as a signal peptide directing secretion; that stretch reads MAFSFLNKLLIIFIFIFISLSSSSPTIS. The interval 40–95 is disordered; sequence LLPSPGDALPSDDGSGTIPSSPSPPDPDTNDGSYPDPLAFSPFASPPVSSPSPPPS. 2 stretches are compositionally biased toward low complexity: residues 50–59 and 69–82; these read SDDGSGTIPS and NDGS…FSPF. Residues 83–95 show a composition bias toward pro residues; sequence ASPPVSSPSPPPS. A lipid anchor (GPI-anchor amidated serine) is attached at Ser-89. Positions 90-116 are cleaved as a propeptide — removed in mature form; sequence PSPPPSLPSAGVLLISLIISSASFLAL.

This sequence belongs to the classical AGP family. In terms of processing, O-glycosylated on the hydroxyproline residues.

The protein resides in the cell membrane. Proteoglycan that seems to be implicated in diverse developmental roles such as differentiation, cell-cell recognition, embryogenesis and programmed cell death. This is Classical arabinogalactan protein 25 (AGP25) from Arabidopsis thaliana (Mouse-ear cress).